The primary structure comprises 273 residues: Thiazole synthase (273 aa).

Lys110 (schiff-base intermediate with DXP) is an active-site residue. 1-deoxy-D-xylulose 5-phosphate contacts are provided by residues Gly171, 198–199 (AG), and 220–221 (NS).

It belongs to the ThiG family. In terms of assembly, homotetramer. Forms heterodimers with either ThiH or ThiS.

It localises to the cytoplasm. The catalysed reaction is [ThiS sulfur-carrier protein]-C-terminal-Gly-aminoethanethioate + 2-iminoacetate + 1-deoxy-D-xylulose 5-phosphate = [ThiS sulfur-carrier protein]-C-terminal Gly-Gly + 2-[(2R,5Z)-2-carboxy-4-methylthiazol-5(2H)-ylidene]ethyl phosphate + 2 H2O + H(+). Its pathway is cofactor biosynthesis; thiamine diphosphate biosynthesis. Functionally, catalyzes the rearrangement of 1-deoxy-D-xylulose 5-phosphate (DXP) to produce the thiazole phosphate moiety of thiamine. Sulfur is provided by the thiocarboxylate moiety of the carrier protein ThiS. In vitro, sulfur can be provided by H(2)S. The sequence is that of Thiazole synthase from Hydrogenovibrio crunogenus (strain DSM 25203 / XCL-2) (Thiomicrospira crunogena).